The chain runs to 427 residues: GTPase Obg (427 aa).

Positions 1-158 (MFIDKAKIHL…LTVTLELKLI (158 aa)) constitute an Obg domain. One can recognise an OBG-type G domain in the interval 159 to 330 (ADVGLVGFPN…LLDYVSIKLK (172 aa)). Residues 165–172 (GFPNVGKS), 190–194 (FTTLT), 212–215 (DIPG), 282–285 (NKTD), and 311–313 (SAA) contribute to the GTP site. Ser172 and Thr192 together coordinate Mg(2+). One can recognise an OCT domain in the interval 347 to 427 (LYELKEKDTN…IYDVEFEYFH (81 aa)).

Belongs to the TRAFAC class OBG-HflX-like GTPase superfamily. OBG GTPase family. Monomer. Mg(2+) serves as cofactor.

It localises to the cytoplasm. An essential GTPase which binds GTP, GDP and possibly (p)ppGpp with moderate affinity, with high nucleotide exchange rates and a fairly low GTP hydrolysis rate. Plays a role in control of the cell cycle, stress response, ribosome biogenesis and in those bacteria that undergo differentiation, in morphogenesis control. This chain is GTPase Obg, found in Alkaliphilus metalliredigens (strain QYMF).